A 386-amino-acid chain; its full sequence is Skeletal aspartic acid-rich protein 1 (386 aa).

The first 24 residues, 1-24 (MAFVSCFHLRLLFLCLALFMAAEC), serve as a signal peptide directing secretion. Disordered stretches follow at residues 33–145 (VDSD…PFSL) and 244–291 (EVTD…DCPH). A compositionally biased stretch (acidic residues) spans 63–107 (YDASDDNDNDNDDDDNNDNDNDNDDDNDVDRDNDNDDDDFDDSND). Basic and acidic residues-rich tracts occupy residues 133–142 (HSVESFEDRP) and 244–265 (EVTD…KDTP). Residues 266–288 (DTDSDPDDSSDNANDGDDDDDDD) are compositionally biased toward acidic residues.

In terms of tissue distribution, component of the acid-insoluble and acid-soluble organic matrix of the aragonitic skeleton (at protein level).

It localises to the secreted. The polypeptide is Skeletal aspartic acid-rich protein 1 (Acropora millepora (Staghorn coral)).